The chain runs to 75 residues: Small ribosomal subunit protein bS16 (75 aa).

This sequence belongs to the bacterial ribosomal protein bS16 family.

The protein is Small ribosomal subunit protein bS16 of Campylobacter jejuni subsp. jejuni serotype O:23/36 (strain 81-176).